The chain runs to 1873 residues: Kinesin-related protein 8 (1873 aa).

The Kinesin motor domain maps to 13 to 413 (CVRVALRVRP…LKYAYRARNI (401 aa)). Residue 93–100 (GQTGSGKT) coordinates ATP. Disordered stretches follow at residues 231-302 (NSPV…DERN), 463-567 (VSIP…SPTS), 778-797 (LDKDKDKDKDNKDKDQYYED), 841-891 (KIDS…ARKT), 930-1008 (KQRV…TEQL), 1179-1207 (PQPLQSQQQQQEKQQKQSNSEQVLEQRSS), 1244-1267 (LPSQQQLSSSQELAEEYTSPSTSS), 1328-1360 (TTTTTTTTNKQQVPKSFAPLNNTNNNNNNNNSS), and 1403-1467 (NNIT…PRPD). Low complexity predominate over residues 232–247 (SPVTSSSTSSTSTSSS). The span at 280–297 (IDEDEEDDEEDEDDDIMS) shows a compositional bias: acidic residues. Low complexity predominate over residues 473–567 (TPTLTNNNNN…NNTATPSPTS (95 aa)). Positions 715-933 (FENDSEELSD…KEIEVHKQRV (219 aa)) form a coiled coil. 5 stretches are compositionally biased toward low complexity: residues 937–1005 (INSK…TPTT), 1182–1200 (LQSQQQQQEKQQKQSNSEQ), 1244–1254 (LPSQQQLSSSQ), 1348–1358 (NNTNNNNNNNN), and 1423–1454 (SLQSSPLSLSLESGLATALANNGNNNNNSNNN). 5 WD repeats span residues 1506–1546 (GHDG…NMLD), 1548–1587 (SSPGPVRSLCINGSSGCMFSGGAERTVKVWDIRSPGNTNL), 1589–1628 (IFKTPSDVNCLVTYGNYVVSGLENGTFKVWDIRHMQKPLK), 1636–1673 (HHTGTIFSMSVTSKYLVTGSRDHTINLFHRDSFVLAQK), and 1677–1714 (PHHDGVTSIAVLDDVIYSGSRDRTIKRWDVSSINNLIN). Residues 1758-1780 (NNNNNNSSNNNKSSSAPSSTTSS) form a disordered region. WD repeat units lie at residues 1805–1842 (AHNDWVNCLCIHNGMIFSGGKDSNIKGWDPLLSSNSLL) and 1844–1873 (GHESSISCLTSSKEFLFSGSTDKCIKIWKC).

The protein belongs to the TRAFAC class myosin-kinesin ATPase superfamily. Kinesin family.

Its subcellular location is the cytoplasm. It is found in the cytoskeleton. Functionally, microtubule-associated force-producing protein that plays a role in organelle transport. Its motor activity is directed toward the microtubule's plus end. Cooperates with kif10 and dynein to organize interphase microtubules. The chain is Kinesin-related protein 8 (kif8) from Dictyostelium discoideum (Social amoeba).